The following is a 199-amino-acid chain: 7-methyl-GTP pyrophosphatase (199 aa).

Asp72 acts as the Proton acceptor in catalysis.

It belongs to the Maf family. YceF subfamily. A divalent metal cation is required as a cofactor.

It is found in the cytoplasm. It carries out the reaction N(7)-methyl-GTP + H2O = N(7)-methyl-GMP + diphosphate + H(+). Functionally, nucleoside triphosphate pyrophosphatase that hydrolyzes 7-methyl-GTP (m(7)GTP). May have a dual role in cell division arrest and in preventing the incorporation of modified nucleotides into cellular nucleic acids. The protein is 7-methyl-GTP pyrophosphatase of Alkalilimnicola ehrlichii (strain ATCC BAA-1101 / DSM 17681 / MLHE-1).